The sequence spans 282 residues: Formamidopyrimidine-DNA glycosylase (282 aa).

P2 functions as the Schiff-base intermediate with DNA in the catalytic mechanism. Residue E3 is the Proton donor of the active site. The active-site Proton donor; for beta-elimination activity is K61. 3 residues coordinate DNA: H93, R112, and K158. The FPG-type zinc-finger motif lies at 244–278; it reads DAYGREGEGCRRCGAVMHREKFMNRSSFYCPRCQP. R268 acts as the Proton donor; for delta-elimination activity in catalysis.

It belongs to the FPG family. In terms of assembly, monomer. Zn(2+) serves as cofactor.

The enzyme catalyses Hydrolysis of DNA containing ring-opened 7-methylguanine residues, releasing 2,6-diamino-4-hydroxy-5-(N-methyl)formamidopyrimidine.. It carries out the reaction 2'-deoxyribonucleotide-(2'-deoxyribose 5'-phosphate)-2'-deoxyribonucleotide-DNA = a 3'-end 2'-deoxyribonucleotide-(2,3-dehydro-2,3-deoxyribose 5'-phosphate)-DNA + a 5'-end 5'-phospho-2'-deoxyribonucleoside-DNA + H(+). Involved in base excision repair of DNA damaged by oxidation or by mutagenic agents. Acts as a DNA glycosylase that recognizes and removes damaged bases. Has a preference for oxidized purines, such as 7,8-dihydro-8-oxoguanine (8-oxoG). Has AP (apurinic/apyrimidinic) lyase activity and introduces nicks in the DNA strand. Cleaves the DNA backbone by beta-delta elimination to generate a single-strand break at the site of the removed base with both 3'- and 5'-phosphates. The protein is Formamidopyrimidine-DNA glycosylase of Mycobacterium leprae (strain Br4923).